The sequence spans 385 residues: Probable tRNA sulfurtransferase (385 aa).

The THUMP domain maps to 57–161 (NESIKRLSNV…NKNAYVWSNK (105 aa)). Residues 181 to 182 (ML), 206 to 207 (YY), arginine 263, glycine 285, and glutamine 294 contribute to the ATP site.

This sequence belongs to the ThiI family.

The protein resides in the cytoplasm. The enzyme catalyses [ThiI sulfur-carrier protein]-S-sulfanyl-L-cysteine + a uridine in tRNA + 2 reduced [2Fe-2S]-[ferredoxin] + ATP + H(+) = [ThiI sulfur-carrier protein]-L-cysteine + a 4-thiouridine in tRNA + 2 oxidized [2Fe-2S]-[ferredoxin] + AMP + diphosphate. It carries out the reaction [ThiS sulfur-carrier protein]-C-terminal Gly-Gly-AMP + S-sulfanyl-L-cysteinyl-[cysteine desulfurase] + AH2 = [ThiS sulfur-carrier protein]-C-terminal-Gly-aminoethanethioate + L-cysteinyl-[cysteine desulfurase] + A + AMP + 2 H(+). Its pathway is cofactor biosynthesis; thiamine diphosphate biosynthesis. Its function is as follows. Catalyzes the ATP-dependent transfer of a sulfur to tRNA to produce 4-thiouridine in position 8 of tRNAs, which functions as a near-UV photosensor. Also catalyzes the transfer of sulfur to the sulfur carrier protein ThiS, forming ThiS-thiocarboxylate. This is a step in the synthesis of thiazole, in the thiamine biosynthesis pathway. The sulfur is donated as persulfide by IscS. The polypeptide is Probable tRNA sulfurtransferase (Clostridium botulinum (strain Alaska E43 / Type E3)).